Consider the following 193-residue polypeptide: ATP synthase subunit delta (193 aa).

This sequence belongs to the ATPase delta chain family. F-type ATPases have 2 components, F(1) - the catalytic core - and F(0) - the membrane proton channel. F(1) has five subunits: alpha(3), beta(3), gamma(1), delta(1), epsilon(1). F(0) has three main subunits: a(1), b(2) and c(10-14). The alpha and beta chains form an alternating ring which encloses part of the gamma chain. F(1) is attached to F(0) by a central stalk formed by the gamma and epsilon chains, while a peripheral stalk is formed by the delta and b chains.

It localises to the cell inner membrane. In terms of biological role, f(1)F(0) ATP synthase produces ATP from ADP in the presence of a proton or sodium gradient. F-type ATPases consist of two structural domains, F(1) containing the extramembraneous catalytic core and F(0) containing the membrane proton channel, linked together by a central stalk and a peripheral stalk. During catalysis, ATP synthesis in the catalytic domain of F(1) is coupled via a rotary mechanism of the central stalk subunits to proton translocation. Functionally, this protein is part of the stalk that links CF(0) to CF(1). It either transmits conformational changes from CF(0) to CF(1) or is implicated in proton conduction. This chain is ATP synthase subunit delta, found in Allorhizobium ampelinum (strain ATCC BAA-846 / DSM 112012 / S4) (Agrobacterium vitis (strain S4)).